The following is a 259-amino-acid chain: Probable metal transport system ATP-binding protein CPn_0348/CP_0412/CPj0348/CpB0355 (259 aa).

The region spanning 3–241 is the ABC transporter domain; it reads VKDETFWSVH…TIFQTYGCEI (239 aa). Residue 41–48 participates in ATP binding; sequence GPNGAGKS.

This sequence belongs to the ABC transporter superfamily.

It is found in the cell inner membrane. Part of an ATP-driven transport system CPn0346/CPn0347/CPn0348/CPn0349 for a metal. Probably responsible for energy coupling to the transport system. In Chlamydia pneumoniae (Chlamydophila pneumoniae), this protein is Probable metal transport system ATP-binding protein CPn_0348/CP_0412/CPj0348/CpB0355.